A 443-amino-acid polypeptide reads, in one-letter code: Dihydroorotase (443 aa).

2 residues coordinate Zn(2+): histidine 80 and histidine 82. Substrate is bound by residues 82 to 84 (HFR) and asparagine 114. Zn(2+) contacts are provided by aspartate 170, histidine 197, and histidine 251. Asparagine 297 contributes to the substrate binding site. Zn(2+) is bound at residue aspartate 324. Aspartate 324 is a catalytic residue. Residues histidine 328 and 342-343 (FG) contribute to the substrate site.

This sequence belongs to the metallo-dependent hydrolases superfamily. DHOase family. Class I DHOase subfamily. Zn(2+) serves as cofactor.

The enzyme catalyses (S)-dihydroorotate + H2O = N-carbamoyl-L-aspartate + H(+). It participates in pyrimidine metabolism; UMP biosynthesis via de novo pathway; (S)-dihydroorotate from bicarbonate: step 3/3. Functionally, catalyzes the reversible cyclization of carbamoyl aspartate to dihydroorotate. This chain is Dihydroorotase, found in Wolbachia sp. subsp. Brugia malayi (strain TRS).